The chain runs to 355 residues: Heterogeneous nuclear ribonucleoprotein D0 (355 aa).

Positions 1-91 are disordered; sequence MSEEQFGGDG…SSPRHTEAAA (91 aa). Serine 2 carries the N-acetylserine modification. The span at 11–43 shows a compositional bias: low complexity; the sequence is AAAAATAAVGGSAGEQEGAMVAAAAQGPAAAAG. Gly residues predominate over residues 44–58; the sequence is SGSGGGGSAAGGTEG. A compositionally biased stretch (basic and acidic residues) spans 64-73; the sequence is EGAKIDASKN. Phosphoserine is present on serine 71. A Glycyl lysine isopeptide (Lys-Gly) (interchain with G-Cter in SUMO2) cross-link involves residue lysine 72. A phosphoserine mark is found at serine 80, serine 82, and serine 83. RRM domains lie at 97-179 and 182-261; these read WKMF…KTKE and KKIF…MSKE. The residue at position 119 (lysine 119) is an N6-methyllysine. Threonine 127 is subject to Phosphothreonine. Lysine 129 is covalently cross-linked (Glycyl lysine isopeptide (Lys-Gly) (interchain with G-Cter in SUMO2)). The residue at position 165 (lysine 165) is an N6-acetyllysine. The residue at position 190 (serine 190) is a Phosphoserine. Phosphothreonine is present on threonine 193. A Glycyl lysine isopeptide (Lys-Gly) (interchain with G-Cter in SUMO2) cross-link involves residue lysine 197. Lysine 243 and lysine 251 each carry N6-acetyllysine. Residues glutamate 261 and tyrosine 263 each carry the omega-N-methylarginine modification. A Phosphoserine modification is found at serine 271. 4 positions are modified to omega-N-methylarginine: arginine 272, arginine 278, arginine 280, and arginine 282. At arginine 345 the chain carries Asymmetric dimethylarginine; alternate. Arginine 345 carries the dimethylated arginine; alternate modification. Arginine 345 is subject to Omega-N-methylarginine; alternate.

Identified in a IGF2BP1-dependent mRNP granule complex containing untranslated mRNAs. Part of a complex associated with the FOS mCRD domain and consisting of PABPC1, PAIP1, CSDE1/UNR and SYNCRIP. Interacts with IGF2BP2. Interacts with GTPBP1. Interacts with EIF4G1; the interaction requires RNA. Interacts with EIF3B and RPS3. In terms of processing, methylated by PRMT1, in an insulin-dependent manner. The PRMT1-mediated methylation regulates its phosphorylation. Arg-345 is dimethylated, probably to asymmetric dimethylarginine.

The protein resides in the nucleus. It localises to the cytoplasm. Its function is as follows. Binds with high affinity to RNA molecules that contain AU-rich elements (AREs) found within the 3'-UTR of many proto-oncogenes and cytokine mRNAs. Also binds to double- and single-stranded DNA sequences in a specific manner and functions a transcription factor. Each of the RNA-binding domains specifically can bind solely to a single-stranded non-monotonous 5'-UUAG-3' sequence and also weaker to the single-stranded 5'-TTAGGG-3' telomeric DNA repeat. Binds RNA oligonucleotides with 5'-UUAGGG-3' repeats more tightly than the telomeric single-stranded DNA 5'-TTAGGG-3' repeats. Binding of RRM1 to DNA inhibits the formation of DNA quadruplex structure which may play a role in telomere elongation. May be involved in translationally coupled mRNA turnover. Implicated with other RNA-binding proteins in the cytoplasmic deadenylation/translational and decay interplay of the FOS mRNA mediated by the major coding-region determinant of instability (mCRD) domain. May play a role in the regulation of the rhythmic expression of circadian clock core genes. Directly binds to the 3'UTR of CRY1 mRNA and induces CRY1 rhythmic translation. May also be involved in the regulation of PER2 translation. In Mus musculus (Mouse), this protein is Heterogeneous nuclear ribonucleoprotein D0 (Hnrnpd).